Reading from the N-terminus, the 1019-residue chain is Photoactivated adenylate cyclase subunit alpha-like protein FB (1019 aa).

Residues 55–148 enclose the BLUF 1 domain; that stretch reads LRRLMYLSAS…GRLYGEWHMK (94 aa). A Guanylate cyclase 1 domain is found at 204–332; the sequence is VVTFIYLVEF…DCINTASRIT (129 aa). Residues 467 to 559 enclose the BLUF 2 domain; that stretch reads LITLTYISQA…REYGSPLDMT (93 aa). Residues 615–744 enclose the Guanylate cyclase 2 domain; that stretch reads VLLATDICSF…EVSARVMEVV (130 aa). Over residues 825–839 the composition is skewed to low complexity; sequence APGRGAPAGGIPSSP. The segment at 825-862 is disordered; the sequence is APGRGAPAGGIPSSPKVRPPGRTNSVSSYTPDPNEALD. The span at 846–855 shows a compositional bias: polar residues; sequence RTNSVSSYTP.

It belongs to the adenylyl cyclase class-4/guanylyl cyclase family. In terms of assembly, heterotetramer of two alpha and two beta subunits.

It is found in the cell projection. Its subcellular location is the cilium. It localises to the flagellum. The polypeptide is Photoactivated adenylate cyclase subunit alpha-like protein FB (Euglena gracilis).